The sequence spans 234 residues: Uridylate kinase (234 aa).

Residues 8–11, glycine 51, and arginine 55 contribute to the ATP site; that span reads KLSG. UMP is bound by residues aspartate 68 and 129-136; that span reads TSNPFFTT. Threonine 156, tyrosine 162, and aspartate 165 together coordinate ATP.

Belongs to the UMP kinase family. In terms of assembly, homohexamer.

It localises to the cytoplasm. The catalysed reaction is UMP + ATP = UDP + ADP. The protein operates within pyrimidine metabolism; CTP biosynthesis via de novo pathway; UDP from UMP (UMPK route): step 1/1. Inhibited by UTP. Its function is as follows. Catalyzes the reversible phosphorylation of UMP to UDP. In Fervidobacterium nodosum (strain ATCC 35602 / DSM 5306 / Rt17-B1), this protein is Uridylate kinase.